Reading from the N-terminus, the 314-residue chain is Type II methyltransferase M.HpaI (314 aa).

Belongs to the N(4)/N(6)-methyltransferase family.

The catalysed reaction is a 2'-deoxyadenosine in DNA + S-adenosyl-L-methionine = an N(6)-methyl-2'-deoxyadenosine in DNA + S-adenosyl-L-homocysteine + H(+). A beta subtype methylase that recognizes the double-stranded sequence 5'-GTTAAC-3', methylates A-5 on both strands, and protects the DNA from cleavage by the HpaI endonuclease. The protein is Type II methyltransferase M.HpaI (hpaIM) of Haemophilus parainfluenzae.